An 83-amino-acid polypeptide reads, in one-letter code: ATP synthase subunit c, chloroplastic (83 aa).

Helical transmembrane passes span Ile-4 to Pro-24 and Leu-57 to Ala-77.

The protein belongs to the ATPase C chain family. As to quaternary structure, F-type ATPases have 2 components, F(1) - the catalytic core - and F(0) - the membrane proton channel. F(1) has five subunits: alpha(3), beta(3), gamma(1), delta(1), epsilon(1). F(0) has four main subunits: a(1), b(1), b'(1) and c(10-14). The alpha and beta chains form an alternating ring which encloses part of the gamma chain. F(1) is attached to F(0) by a central stalk formed by the gamma and epsilon chains, while a peripheral stalk is formed by the delta, b and b' chains.

It localises to the plastid. The protein localises to the chloroplast thylakoid membrane. F(1)F(0) ATP synthase produces ATP from ADP in the presence of a proton or sodium gradient. F-type ATPases consist of two structural domains, F(1) containing the extramembraneous catalytic core and F(0) containing the membrane proton channel, linked together by a central stalk and a peripheral stalk. During catalysis, ATP synthesis in the catalytic domain of F(1) is coupled via a rotary mechanism of the central stalk subunits to proton translocation. In terms of biological role, key component of the F(0) channel; it plays a direct role in translocation across the membrane. A homomeric c-ring of between 10-14 subunits forms the central stalk rotor element with the F(1) delta and epsilon subunits. In Galdieria sulphuraria (Red alga), this protein is ATP synthase subunit c, chloroplastic.